The chain runs to 179 residues: Acireductone dioxygenase (179 aa).

Residues His-97, His-99, Glu-103, and His-141 each contribute to the Fe(2+) site. Positions 97, 99, 103, and 141 each coordinate Ni(2+).

This sequence belongs to the acireductone dioxygenase (ARD) family. Monomer. Fe(2+) is required as a cofactor. Requires Ni(2+) as cofactor.

It carries out the reaction 1,2-dihydroxy-5-(methylsulfanyl)pent-1-en-3-one + O2 = 3-(methylsulfanyl)propanoate + CO + formate + 2 H(+). The enzyme catalyses 1,2-dihydroxy-5-(methylsulfanyl)pent-1-en-3-one + O2 = 4-methylsulfanyl-2-oxobutanoate + formate + 2 H(+). Its pathway is amino-acid biosynthesis; L-methionine biosynthesis via salvage pathway; L-methionine from S-methyl-5-thio-alpha-D-ribose 1-phosphate: step 5/6. Functionally, catalyzes 2 different reactions between oxygen and the acireductone 1,2-dihydroxy-3-keto-5-methylthiopentene (DHK-MTPene) depending upon the metal bound in the active site. Fe-containing acireductone dioxygenase (Fe-ARD) produces formate and 2-keto-4-methylthiobutyrate (KMTB), the alpha-ketoacid precursor of methionine in the methionine recycle pathway. Ni-containing acireductone dioxygenase (Ni-ARD) produces methylthiopropionate, carbon monoxide and formate, and does not lie on the methionine recycle pathway. This is Acireductone dioxygenase from Gluconacetobacter diazotrophicus (strain ATCC 49037 / DSM 5601 / CCUG 37298 / CIP 103539 / LMG 7603 / PAl5).